Here is a 329-residue protein sequence, read N- to C-terminus: L-lactate dehydrogenase (329 aa).

NAD(+)-binding positions include valine 18, glutamate 39, lysine 46, tyrosine 71, and 85–86; that span reads GA. Glutamine 88 and arginine 94 together coordinate substrate. NAD(+) contacts are provided by residues serine 107, 124-126, and serine 149; that span reads AAN. 126 to 129 contributes to the substrate binding site; it reads NPVD. 154–157 lines the substrate pocket; the sequence is DSAR. Beta-D-fructose 1,6-bisphosphate contacts are provided by arginine 159 and histidine 174. The Proton acceptor role is filled by histidine 181. Position 226 is a phosphotyrosine (tyrosine 226). Position 235 (threonine 235) interacts with substrate.

This sequence belongs to the LDH/MDH superfamily. LDH family. As to quaternary structure, homotetramer.

The protein resides in the cytoplasm. The catalysed reaction is (S)-lactate + NAD(+) = pyruvate + NADH + H(+). The protein operates within fermentation; pyruvate fermentation to lactate; (S)-lactate from pyruvate: step 1/1. With respect to regulation, allosterically activated by fructose 1,6-bisphosphate (FBP). In terms of biological role, catalyzes the conversion of lactate to pyruvate. The chain is L-lactate dehydrogenase from Streptococcus agalactiae serotype V (strain ATCC BAA-611 / 2603 V/R).